The primary structure comprises 84 residues: Mu-conotoxin-like Cal 12.2a (84 aa).

The N-terminal stretch at 1 to 19 is a signal peptide; that stretch reads MKLTCVLVVLLLVLPFGDL. A propeptide spanning residues 20–42 is cleaved from the precursor; it reads ITTSNTEDNKRGATPWQNSLKAR. 4 disulfide bridges follow: C45-C57, C52-C65, C59-C70, and C64-C76. P48 bears the 4-hydroxyproline mark. W72 is modified (6'-bromotryptophan). Residue P77 is modified to 4-hydroxyproline. Position 81 is a 6'-bromotryptophan (W81).

This sequence belongs to the conotoxin O1 superfamily. Expressed by the venom duct.

Its subcellular location is the secreted. Mu-conotoxins block voltage-gated sodium channels. This toxin reversibly blocks voltage-gated sodium channel in cephalopods, with no alteration in the voltage dependence of sodium conductance or on the kinetics of inactivation. The protein is Mu-conotoxin-like Cal 12.2a of Californiconus californicus (California cone).